The sequence spans 335 residues: Pro-cathepsin H (335 aa).

The first 22 residues, 1 to 22 (MWAVLPLLCAGAWLLGAPACGA), serve as a signal peptide directing secretion. A propeptide spans 23–97 (AELAANSLEK…DELKRKYLWS (75 aa)) (activation peptide). N-linked (GlcNAc...) asparagine glycans are attached at residues N72 and N101. Intrachain disulfides connect C102–C327, C138–C181, C172–C214, and C272–C322. Positions 106 to 115 (KSNYLRGTGP) are excised as a propeptide. The active site involves C141. N-linked (GlcNAc...) asparagine glycosylation is present at N230. Residues H281 and N301 contribute to the active site.

The protein belongs to the peptidase C1 family. As to quaternary structure, composed of a mini chain and a large chain. The large chain may be split into heavy and light chain. All chains are held together by disulfide bonds.

The protein localises to the lysosome. It carries out the reaction Hydrolysis of proteins, acting as an aminopeptidase (notably, cleaving Arg-|-Xaa bonds) as well as an endopeptidase.. In terms of biological role, important for the overall degradation of proteins in lysosomes. This Bos taurus (Bovine) protein is Pro-cathepsin H (CTSH).